A 351-amino-acid chain; its full sequence is Uroporphyrinogen decarboxylase (351 aa).

Substrate-binding positions include 27–31 (RQAGR), D77, Y154, T209, and H327.

The protein belongs to the uroporphyrinogen decarboxylase family. In terms of assembly, homodimer.

The protein resides in the cytoplasm. The enzyme catalyses uroporphyrinogen III + 4 H(+) = coproporphyrinogen III + 4 CO2. Its pathway is porphyrin-containing compound metabolism; protoporphyrin-IX biosynthesis; coproporphyrinogen-III from 5-aminolevulinate: step 4/4. Catalyzes the decarboxylation of four acetate groups of uroporphyrinogen-III to yield coproporphyrinogen-III. This chain is Uroporphyrinogen decarboxylase, found in Thioalkalivibrio sulfidiphilus (strain HL-EbGR7).